The primary structure comprises 256 residues: Protein FixA (256 aa).

The protein belongs to the ETF beta-subunit/FixA family. In terms of assembly, heterodimer of FixA and FixB.

Its pathway is amine and polyamine metabolism; carnitine metabolism. In terms of biological role, required for anaerobic carnitine reduction. May bring reductant to CaiA. This is Protein FixA from Escherichia fergusonii (strain ATCC 35469 / DSM 13698 / CCUG 18766 / IAM 14443 / JCM 21226 / LMG 7866 / NBRC 102419 / NCTC 12128 / CDC 0568-73).